The following is a 158-amino-acid chain: NAD(P)H-quinone oxidoreductase subunit J, chloroplastic (158 aa).

It belongs to the complex I 30 kDa subunit family. In terms of assembly, NDH is composed of at least 16 different subunits, 5 of which are encoded in the nucleus.

The protein localises to the plastid. The protein resides in the chloroplast thylakoid membrane. It carries out the reaction a plastoquinone + NADH + (n+1) H(+)(in) = a plastoquinol + NAD(+) + n H(+)(out). The catalysed reaction is a plastoquinone + NADPH + (n+1) H(+)(in) = a plastoquinol + NADP(+) + n H(+)(out). Functionally, NDH shuttles electrons from NAD(P)H:plastoquinone, via FMN and iron-sulfur (Fe-S) centers, to quinones in the photosynthetic chain and possibly in a chloroplast respiratory chain. The immediate electron acceptor for the enzyme in this species is believed to be plastoquinone. Couples the redox reaction to proton translocation, and thus conserves the redox energy in a proton gradient. This chain is NAD(P)H-quinone oxidoreductase subunit J, chloroplastic, found in Cucumis sativus (Cucumber).